The chain runs to 478 residues: Multidrug resistance outer membrane protein MdtQ (478 aa).

The signal sequence occupies residues 1 to 21; sequence MNRDSFYPAIACFPLLLMLAG. Cys-22 carries N-palmitoyl cysteine lipidation. The S-diacylglycerol cysteine moiety is linked to residue Cys-22.

This sequence belongs to the outer membrane factor (OMF) (TC 1.B.17) family.

Its subcellular location is the cell outer membrane. Could be involved in resistance to puromycin, acriflavine and tetraphenylarsonium chloride. The sequence is that of Multidrug resistance outer membrane protein MdtQ (mdtQ) from Escherichia coli O6:H1 (strain CFT073 / ATCC 700928 / UPEC).